Consider the following 166-residue polypeptide: PTS system glucose-specific EIIA component (166 aa).

A PTS EIIA type-1 domain is found at 34-138 (DPVFAQKMMG…SVISPIIITN (105 aa)). Zn(2+) contacts are provided by histidine 71 and histidine 86. Histidine 86 serves as the catalytic Tele-phosphohistidine intermediate; for EIIA activity. Histidine 86 carries the post-translational modification Phosphohistidine; by HPr.

As to quaternary structure, heterodimer with glycerol kinase (glpk). Requires Zn(2+) as cofactor.

It localises to the cytoplasm. In terms of biological role, the phosphoenolpyruvate-dependent sugar phosphotransferase system (sugar PTS), a major carbohydrate active transport system, catalyzes the phosphorylation of incoming sugar substrates concomitantly with their translocation across the cell membrane. The enzyme II complex composed of PtsG and Crr is involved in glucose transport. This Staphylococcus aureus (strain Mu50 / ATCC 700699) protein is PTS system glucose-specific EIIA component (crr).